The chain runs to 325 residues: Coiled-coil domain-containing protein 130 homolog (325 aa).

The stretch at 156-262 (LKLENKKLDI…KLKRELIKNE (107 aa)) forms a coiled coil.

It belongs to the CWC16 family.

This is Coiled-coil domain-containing protein 130 homolog from Dictyostelium discoideum (Social amoeba).